Reading from the N-terminus, the 327-residue chain is Lipid phosphate phosphatase 1 (327 aa).

Helical transmembrane passes span 51–71, 93–113, 118–138, 187–207, 217–237, and 244–264; these read WIILVILIAIEIGLNLISPFY, IWSVPVYAVLLPIIVFVCFYL, VYDLHHSILGLLFAVLITGVI, FPSGHTSWSFAGLTFLSLYLS, GHVAKLCLVIFPLLAACLVGI, and WHHWQDVFAGALIGTLVAAFC.

Belongs to the PA-phosphatase related phosphoesterase family. In terms of tissue distribution, strongly expressed in leaves, moderately in roots, weakly in floral hamps and flower buds, and not detected in adult flowers and seedpods.

The protein resides in the membrane. Its activity is regulated as follows. PA phosphatase activity inhibited by N-ethylmaleimide with an IC(50) value of 10 mM. Its function is as follows. Plays a general role in cellular responses to stress, may be by attenuating the signal produced by phospholipases. Exhibits both diacylglycerol pyrophosphate (DGPP) phosphatase and phosphatidate (PA) phosphatase activities. Substrate preference is diacylglycerol pyrophosphate &gt; phosphatidate. In Arabidopsis thaliana (Mouse-ear cress), this protein is Lipid phosphate phosphatase 1 (LPP1).